The primary structure comprises 82 residues: Acyl carrier protein (82 aa).

Residues 3-81 (LSREKVLESI…DAVDFIIAAK (79 aa)) form the Carrier domain. An O-(pantetheine 4'-phosphoryl)serine modification is found at serine 41.

The protein belongs to the acyl carrier protein (ACP) family. In terms of processing, 4'-phosphopantetheine is transferred from CoA to a specific serine of apo-ACP by AcpS. This modification is essential for activity because fatty acids are bound in thioester linkage to the sulfhydryl of the prosthetic group.

It localises to the cytoplasm. It participates in lipid metabolism; fatty acid biosynthesis. In terms of biological role, carrier of the growing fatty acid chain in fatty acid biosynthesis. This is Acyl carrier protein from Tropheryma whipplei (strain Twist) (Whipple's bacillus).